The following is a 265-amino-acid chain: Glutamate racemase (265 aa).

Substrate-binding positions include 12–13 and 44–45; these read DS and YG. Cys75 functions as the Proton donor/acceptor in the catalytic mechanism. 76–77 contributes to the substrate binding site; the sequence is NT. Catalysis depends on Cys186, which acts as the Proton donor/acceptor. 187 to 188 is a substrate binding site; sequence TH.

This sequence belongs to the aspartate/glutamate racemases family.

The catalysed reaction is L-glutamate = D-glutamate. Its pathway is cell wall biogenesis; peptidoglycan biosynthesis. In terms of biological role, provides the (R)-glutamate required for cell wall biosynthesis. This chain is Glutamate racemase, found in Pseudomonas putida (strain W619).